A 580-amino-acid polypeptide reads, in one-letter code: Netrin-3 (580 aa).

A signal peptide spans 1–27 (MPGWPWGLLLTAGTLFAALSPGPPAPA). The Laminin N-terminal domain maps to 36–254 (APRGCVPGLV…AATDLQVGGR (219 aa)). Residues 62 to 83 (PATRACDASDPRRAHSPALLTS) form a disordered region. Disulfide bonds link Cys-92–Cys-125, Cys-255–Cys-264, Cys-257–Cys-274, Cys-276–Cys-285, Cys-288–Cys-308, Cys-311–Cys-320, Cys-313–Cys-338, Cys-341–Cys-350, Cys-353–Cys-371, Cys-374–Cys-386, Cys-376–Cys-393, Cys-395–Cys-404, Cys-407–Cys-421, Cys-441–Cys-514, and Cys-460–Cys-577. Asn-104 carries an N-linked (GlcNAc...) asparagine glycan. 3 consecutive Laminin EGF-like domains span residues 255 to 308 (CKCN…SHAC), 311 to 371 (CSCN…RRAC), and 374 to 421 (CDCH…VAPC). Residue Asn-387 is glycosylated (N-linked (GlcNAc...) asparagine). Residues 441-577 (CDSHCKPARG…LQRRERRGRC (137 aa)) form the NTR domain. Positions 500 to 502 (RGS) match the Cell attachment site; atypical motif.

As to expression, spinal cord.

The protein localises to the secreted. It is found in the extracellular space. Its subcellular location is the extracellular matrix. Netrins control guidance of CNS commissural axons and peripheral motor axons. The protein is Netrin-3 (NTN3) of Homo sapiens (Human).